The chain runs to 327 residues: Eukaryotic translation initiation factor 3 subunit I (327 aa).

5 WD repeats span residues 8–47, 50–89, 147–186, 189–228, and 286–327; these read GHQR…RLGT, GHIG…ALGK, EQQS…ELNS, DHTA…CLKT, and GHFG…HTFE.

It belongs to the eIF-3 subunit I family. In terms of assembly, component of the eukaryotic translation initiation factor 3 (eIF-3) complex.

Its subcellular location is the cytoplasm. Component of the eukaryotic translation initiation factor 3 (eIF-3) complex, which is involved in protein synthesis of a specialized repertoire of mRNAs and, together with other initiation factors, stimulates binding of mRNA and methionyl-tRNAi to the 40S ribosome. The eIF-3 complex specifically targets and initiates translation of a subset of mRNAs involved in cell proliferation. The polypeptide is Eukaryotic translation initiation factor 3 subunit I (Anopheles gambiae (African malaria mosquito)).